Here is a 776-residue protein sequence, read N- to C-terminus: Homoaconitase, mitochondrial (776 aa).

The transit peptide at 1-38 directs the protein to the mitochondrion; that stretch reads MQSRLVSQSGLGRRWAVLRCALSKTYQRRTLTSTRRQF. [4Fe-4S] cluster-binding residues include Cys-394, Cys-463, and Cys-466.

The protein belongs to the aconitase/IPM isomerase family. The cofactor is [4Fe-4S] cluster.

Its subcellular location is the mitochondrion. The catalysed reaction is (2R,3S)-homoisocitrate = cis-homoaconitate + H2O. It functions in the pathway amino-acid biosynthesis; L-lysine biosynthesis via AAA pathway; L-alpha-aminoadipate from 2-oxoglutarate: step 3/5. In terms of biological role, catalyzes the reversible hydration of cis-homoaconitate to (2R,3S)-homoisocitrate, a step in the alpha-aminoadipate pathway for lysine biosynthesis. The polypeptide is Homoaconitase, mitochondrial (lys4) (Emericella nidulans (strain FGSC A4 / ATCC 38163 / CBS 112.46 / NRRL 194 / M139) (Aspergillus nidulans)).